The following is a 377-amino-acid chain: Glutamate 5-kinase (377 aa).

Residue lysine 18 participates in ATP binding. Substrate is bound by residues serine 55, aspartate 142, and asparagine 154. ATP contacts are provided by residues 174-175 (SD) and 216-222 (TGGMKSK). The region spanning 281-359 (QGEVVVDAGA…REIEALLGYK (79 aa)) is the PUA domain.

Belongs to the glutamate 5-kinase family.

The protein localises to the cytoplasm. It carries out the reaction L-glutamate + ATP = L-glutamyl 5-phosphate + ADP. Its pathway is amino-acid biosynthesis; L-proline biosynthesis; L-glutamate 5-semialdehyde from L-glutamate: step 1/2. Its function is as follows. Catalyzes the transfer of a phosphate group to glutamate to form L-glutamate 5-phosphate. This Meiothermus ruber protein is Glutamate 5-kinase.